The sequence spans 263 residues: tRNA pseudouridine synthase A (263 aa).

D53 (nucleophile) is an active-site residue. Residue Y111 participates in substrate binding. The segment at T232–Y263 is disordered. Polar residues predominate over residues G241–Y263.

It belongs to the tRNA pseudouridine synthase TruA family. As to quaternary structure, homodimer.

It catalyses the reaction uridine(38/39/40) in tRNA = pseudouridine(38/39/40) in tRNA. Its function is as follows. Formation of pseudouridine at positions 38, 39 and 40 in the anticodon stem and loop of transfer RNAs. This chain is tRNA pseudouridine synthase A, found in Halalkalibacterium halodurans (strain ATCC BAA-125 / DSM 18197 / FERM 7344 / JCM 9153 / C-125) (Bacillus halodurans).